The sequence spans 405 residues: Palmitoyltransferase PFA5 (405 aa).

The next 5 helical transmembrane spans lie at 12 to 32 (YIKL…NYAI), 51 to 71 (IILW…WVLI), 154 to 174 (LFFM…LIYC), 191 to 211 (FIVL…LFGI), and 310 to 330 (FYTL…FIDI). One can recognise a DHHC domain in the interval 111 to 161 (YYCSNSNSIKLERSFFSKDVGYNVIKFDHYCIWIGQPIGQDNYLFFMKFMM).

Belongs to the DHHC palmitoyltransferase family. PFA5 subfamily. Autopalmitoylated.

The protein localises to the membrane. It catalyses the reaction L-cysteinyl-[protein] + hexadecanoyl-CoA = S-hexadecanoyl-L-cysteinyl-[protein] + CoA. The sequence is that of Palmitoyltransferase PFA5 (PFA5) from Candida albicans (strain SC5314 / ATCC MYA-2876) (Yeast).